The primary structure comprises 318 residues: UDP-N-acetylenolpyruvoylglucosamine reductase (318 aa).

An FAD-binding PCMH-type domain is found at 39 to 202; that stretch reads VGGPADLLVR…TRVQLTLRPG (164 aa). Residue Arg-182 is part of the active site. The segment covering 214-223 has biased composition (basic and acidic residues); it reads DRDGRRRTQP. Residues 214 to 235 form a disordered region; the sequence is DRDGRRRTQPLDRPTFGSTFTN. The active-site Proton donor is the Ser-231. The active site involves Glu-301.

It belongs to the MurB family. FAD serves as cofactor.

It localises to the cytoplasm. It carries out the reaction UDP-N-acetyl-alpha-D-muramate + NADP(+) = UDP-N-acetyl-3-O-(1-carboxyvinyl)-alpha-D-glucosamine + NADPH + H(+). It participates in cell wall biogenesis; peptidoglycan biosynthesis. Cell wall formation. This chain is UDP-N-acetylenolpyruvoylglucosamine reductase, found in Anaeromyxobacter sp. (strain Fw109-5).